We begin with the raw amino-acid sequence, 437 residues long: Sodium/bile acid cotransporter 4 (437 aa).

Topologically, residues 1 to 103 (MDGLDNTTRL…PPFWDTPLNH (103 aa)) are extracellular. 3 N-linked (GlcNAc...) asparagine glycosylation sites follow: Asn-6, Asn-20, and Asn-26. The segment at 16–84 (LLPDNLTLSP…GGVAGQDSST (69 aa)) is disordered. A compositionally biased stretch (low complexity) spans 21–50 (LTLSPNASSTSASTLSPLPVTSSPSPGLSL). Residues 104-124 (GLNVFVGAALCITMLGLGCTV) form a helical membrane-spanning segment. At 125-140 (DVNHFGAHVRRPVGAL) the chain is on the cytoplasmic side. Residues 141–161 (LAALCQFGFLPLLAFLLALAF) form a helical membrane-spanning segment. Residues 162-197 (KLDEVAAVAVLLCGCCPGGNLSNLMSLLVDGDMNLS) are Extracellular-facing. Asn-181 and Asn-195 each carry an N-linked (GlcNAc...) asparagine glycan. Residues 198–218 (IIMTISSTLLALVLMPLCLWI) form a helical membrane-spanning segment. Residues 219-233 (YSRAWINTPLVQLLP) are Cytoplasmic-facing. Residues 234–254 (LGAVTLTLCSTLIPIGLGVFI) traverse the membrane as a helical segment. Topologically, residues 255-267 (RYKYNRVADYIVK) are extracellular. The helical transmembrane segment at 268–288 (VSLCSLLVTLVVLFIMTGTML) threads the bilayer. Over 289-291 (GPE) the chain is Cytoplasmic. A helical transmembrane segment spans residues 292–312 (LLASIPAAVYVVAIFMPLAGY). At 313–360 (ASGYGLATLFHLPPNCKRTVCLETGSQNVQLCTAILKLAFPPRFIGSM) the chain is on the extracellular side. A helical transmembrane segment spans residues 361–381 (YMFPLLYALFQSAEAGVFVLI). Topologically, residues 382 to 437 (YKMYGSEILHKREALDEDDDTDISYKKLKEEELADTSYGTVGTDDLVLMETTQTSL) are cytoplasmic.

It belongs to the bile acid:sodium symporter (BASS) (TC 2.A.28) family. Activated following N-terminal proteolytic cleavage by thrombin and/or proteases. As to expression, mainly expressed in the central nervous system cholinergic neurons. Expressed (at protein level) in motor regions of the spinal cord and rhombencephalon, in mesopontine cholinergic neurons, the medial habenula, cholinergic areas of the forebrain, and the gut myenteric plexus.

The protein localises to the cell membrane. Its function is as follows. Transporter for bile acids. This Rattus norvegicus (Rat) protein is Sodium/bile acid cotransporter 4 (Slc10a4).